The primary structure comprises 88 residues: Small ribosomal subunit protein uS19 (88 aa).

Belongs to the universal ribosomal protein uS19 family.

Its function is as follows. Protein S19 forms a complex with S13 that binds strongly to the 16S ribosomal RNA. This is Small ribosomal subunit protein uS19 from Carsonella ruddii (strain PV).